The following is a 261-amino-acid chain: Cytochrome c oxidase subunit 3 (261 aa).

The Mitochondrial matrix segment spans residues 1 to 15 (MTKQMHAFHMVNPSP). The chain crosses the membrane as a helical span at residues 16–34 (WPLTGAASAFMLTSGLAMW). Residues 35-40 (FHKHSN) lie on the Mitochondrial intermembrane side of the membrane. A helical membrane pass occupies residues 41–66 (TLIFLSMILMLLTMYQWWRDITREGT). Residues 67-72 (FQGHHT) lie on the Mitochondrial matrix side of the membrane. Residues 73 to 105 (SLVQKSLRYGMILFIVSEVCFFFGFFWTFYHSS) traverse the membrane as a helical segment. Over 106–128 (LSPSPDLGMMWPPKGVIPLDPFE) the chain is Mitochondrial intermembrane. A helical transmembrane segment spans residues 129-152 (IPLLNTAILLGSGVSVTWAHHSLM). Over 153–155 (EKT) the chain is Mitochondrial matrix. Residues 156 to 183 (HKDMVISLSITIILGIYFTLLQGMEYFN) form a helical membrane-spanning segment. The Mitochondrial intermembrane segment spans residues 184–190 (STFNISD). A helical membrane pass occupies residues 191 to 223 (NAYGSTFFVATGFHGGHVIIGTLFLTVCLLRQL). The Mitochondrial matrix segment spans residues 224–232 (MFHFTSSHH). A helical membrane pass occupies residues 233–256 (FGFEAAAWYWHFVDVVWLFLFISI). The Mitochondrial intermembrane segment spans residues 257-261 (YWWGS).

Belongs to the cytochrome c oxidase subunit 3 family. In terms of assembly, component of the cytochrome c oxidase (complex IV, CIV), a multisubunit enzyme composed of 14 subunits. The complex is composed of a catalytic core of 3 subunits MT-CO1, MT-CO2 and MT-CO3, encoded in the mitochondrial DNA, and 11 supernumerary subunits COX4I, COX5A, COX5B, COX6A, COX6B, COX6C, COX7A, COX7B, COX7C, COX8 and NDUFA4, which are encoded in the nuclear genome. The complex exists as a monomer or a dimer and forms supercomplexes (SCs) in the inner mitochondrial membrane with NADH-ubiquinone oxidoreductase (complex I, CI) and ubiquinol-cytochrome c oxidoreductase (cytochrome b-c1 complex, complex III, CIII), resulting in different assemblies (supercomplex SCI(1)III(2)IV(1) and megacomplex MCI(2)III(2)IV(2)).

The protein resides in the mitochondrion inner membrane. It carries out the reaction 4 Fe(II)-[cytochrome c] + O2 + 8 H(+)(in) = 4 Fe(III)-[cytochrome c] + 2 H2O + 4 H(+)(out). Component of the cytochrome c oxidase, the last enzyme in the mitochondrial electron transport chain which drives oxidative phosphorylation. The respiratory chain contains 3 multisubunit complexes succinate dehydrogenase (complex II, CII), ubiquinol-cytochrome c oxidoreductase (cytochrome b-c1 complex, complex III, CIII) and cytochrome c oxidase (complex IV, CIV), that cooperate to transfer electrons derived from NADH and succinate to molecular oxygen, creating an electrochemical gradient over the inner membrane that drives transmembrane transport and the ATP synthase. Cytochrome c oxidase is the component of the respiratory chain that catalyzes the reduction of oxygen to water. Electrons originating from reduced cytochrome c in the intermembrane space (IMS) are transferred via the dinuclear copper A center (CU(A)) of subunit 2 and heme A of subunit 1 to the active site in subunit 1, a binuclear center (BNC) formed by heme A3 and copper B (CU(B)). The BNC reduces molecular oxygen to 2 water molecules using 4 electrons from cytochrome c in the IMS and 4 protons from the mitochondrial matrix. The protein is Cytochrome c oxidase subunit 3 (MT-CO3) of Myxine glutinosa (Atlantic hagfish).